The chain runs to 251 residues: MRKPIIAGNWKMNMNPTQTTEFVNAIKANLPKFDQTESVIGAPAVDLPALLEAAKGTDLKVAAENCYFEEAGAFTGETSPKTLNEMGVDYVIIGHSERRDYFHETDEDINKKAHAIFKNNMTPIFCCGESLETREAGKAEEWVSNQVTEGLKGLSADQVSSMVIAYEPIWAIGTGKTASADQAQEICAVVRQTVAKLYDQTVADKVRIQYGGSVKPANVKEIMGKEDIDGGLVGGASMEPASFLDLVHFND.

9–11 (NWK) provides a ligand contact to substrate. The Electrophile role is filled by H95. Residue E167 is the Proton acceptor of the active site. Substrate-binding positions include G173, S213, and 234-235 (GG).

The protein belongs to the triosephosphate isomerase family. Homodimer.

It is found in the cytoplasm. The catalysed reaction is D-glyceraldehyde 3-phosphate = dihydroxyacetone phosphate. The protein operates within carbohydrate biosynthesis; gluconeogenesis. Its pathway is carbohydrate degradation; glycolysis; D-glyceraldehyde 3-phosphate from glycerone phosphate: step 1/1. Its function is as follows. Involved in the gluconeogenesis. Catalyzes stereospecifically the conversion of dihydroxyacetone phosphate (DHAP) to D-glyceraldehyde-3-phosphate (G3P). The polypeptide is Triosephosphate isomerase (Latilactobacillus sakei subsp. sakei (strain 23K) (Lactobacillus sakei subsp. sakei)).